Here is a 403-residue protein sequence, read N- to C-terminus: MDLLSPLSAVILTYREADANALGRIGEEMRRCIEVIGPKTPMFVLHTCHRVEAYLYGASEEELSSLVERYKRHVESARILRGIEAARHLFRVAAGLESMLLGETDILGQLEEAYDRQVRAGFTRGLLKTVVERAVRVGKKVRTETGISRGPAGLGSLSIIYVSQFVDLKSAKVAVLGAGAVGAGLAKELAERGVAKLYILNRTLEKATEVAKKTGAEARPLTREEVERCLLECDVVFSAVHTLEYVIDMIPPGASVKVVVDLGVPQSVAPGLPIKVVRLSDLAELAQRYSALRKEEAKKAEAIVEEELEMLPKALAKRAVEEAVAEVMARAVEIAEEEGRRAGCEVAQLAAKTTVKRLLLPIVEELKKMAENGRVEHALEVSQIFTRLVGAPHGEPQNLKTVK.

Residues 47 to 50 (TCHR), serine 98, 103 to 105 (ETD), and glutamine 109 each bind substrate. Cysteine 48 serves as the catalytic Nucleophile. Residue 177–182 (GAGAVG) participates in NADP(+) binding.

It belongs to the glutamyl-tRNA reductase family. Homodimer.

The catalysed reaction is (S)-4-amino-5-oxopentanoate + tRNA(Glu) + NADP(+) = L-glutamyl-tRNA(Glu) + NADPH + H(+). Its pathway is porphyrin-containing compound metabolism; protoporphyrin-IX biosynthesis; 5-aminolevulinate from L-glutamyl-tRNA(Glu): step 1/2. Its function is as follows. Catalyzes the NADPH-dependent reduction of glutamyl-tRNA(Glu) to glutamate 1-semialdehyde (GSA). The polypeptide is Glutamyl-tRNA reductase 2 (Pyrobaculum arsenaticum (strain DSM 13514 / JCM 11321 / PZ6)).